Here is a 299-residue protein sequence, read N- to C-terminus: Protease HtpX homolog (299 aa).

Transmembrane regions (helical) follow at residues 19–39 and 41–61; these read LFIVTFSLILFAIGYFFVWYF and WGLTGIVLLAIFIVLYNWIAY. His-146 lines the Zn(2+) pocket. Glu-147 is a catalytic residue. Residue His-150 coordinates Zn(2+). The next 2 membrane-spanning stretches (helical) occupy residues 156-176 and 198-218; these read ILLMTVVAVVAGLIILLRDVM and IILLIIGLIFSIIAPLIVLII. Glu-227 provides a ligand contact to Zn(2+).

It belongs to the peptidase M48B family. The cofactor is Zn(2+).

The protein resides in the cell membrane. The sequence is that of Protease HtpX homolog from Thermoanaerobacter pseudethanolicus (strain ATCC 33223 / 39E) (Clostridium thermohydrosulfuricum).